The primary structure comprises 226 residues: Enolase-phosphatase E1 (226 aa).

The protein belongs to the HAD-like hydrolase superfamily. MasA/MtnC family. As to quaternary structure, monomer. It depends on Mg(2+) as a cofactor.

It carries out the reaction 5-methylsulfanyl-2,3-dioxopentyl phosphate + H2O = 1,2-dihydroxy-5-(methylsulfanyl)pent-1-en-3-one + phosphate. It functions in the pathway amino-acid biosynthesis; L-methionine biosynthesis via salvage pathway; L-methionine from S-methyl-5-thio-alpha-D-ribose 1-phosphate: step 3/6. It participates in amino-acid biosynthesis; L-methionine biosynthesis via salvage pathway; L-methionine from S-methyl-5-thio-alpha-D-ribose 1-phosphate: step 4/6. Its function is as follows. Bifunctional enzyme that catalyzes the enolization of 2,3-diketo-5-methylthiopentyl-1-phosphate (DK-MTP-1-P) into the intermediate 2-hydroxy-3-keto-5-methylthiopentenyl-1-phosphate (HK-MTPenyl-1-P), which is then dephosphorylated to form the acireductone 1,2-dihydroxy-3-keto-5-methylthiopentene (DHK-MTPene). The polypeptide is Enolase-phosphatase E1 (Shewanella amazonensis (strain ATCC BAA-1098 / SB2B)).